Reading from the N-terminus, the 514-residue chain is Endoglucanase MaCel5A (514 aa).

An N-terminal signal peptide occupies residues 1–23 (MKRILFTAGGCLFYLLLAVKAYA). 2 stretches are compositionally biased toward low complexity: residues 91-114 (GSSS…SGSG) and 179-201 (SSSS…SSSG). Disordered stretches follow at residues 91–118 (GSSS…SSSG) and 179–208 (SSSS…GGDS). The active-site Proton donor is the Glu346. The active-site Nucleophile is the Glu439.

It belongs to the glycosyl hydrolase 5 (cellulase A) family.

It carries out the reaction Endohydrolysis of (1-&gt;4)-beta-D-glucosidic linkages in cellulose, lichenin and cereal beta-D-glucans.. Its activity is regulated as follows. Exhibits strong halostability and halotolerance. The activity increases about tenfold in the presence of 0.5 M NaCl, and about fivefold in the presence of 4.0 M NaCl. Tolerates detergents, but activity is decreased in the presence of EDTA. Activity is enhanced in the presence of Mn(2+), Ca(2+), Ba(2+) or Mg(2+), and decreased in the presence of Zn(2+), Cu(2+), Al(3+) or Fe(3+). Its function is as follows. Endoglucanase that exhibits highest activity toward barley beta-glucan, lower activity toward carboxymethyl cellulose (CMC-Na), and marginal activity toward laminarin and xylan. This chain is Endoglucanase MaCel5A, found in Microbulbifer sp. (strain ALW1).